The sequence spans 194 residues: Outer membrane protein A (194 aa).

The signal sequence occupies residues 1 to 24 (MNKPSKFALALAFAAVTASGVASA). The beta stranded transmembrane segment at 30 to 38 (WRNPYGNVW) threads the bilayer. The OmpA-like domain maps to 77–193 (MAAKVVFNAD…RVEIEIVGSR (117 aa)).

The protein belongs to the outer membrane OOP (TC 1.B.6) superfamily.

It is found in the cell outer membrane. Structural protein that may protect the integrity of the bacterium. In Bordetella avium, this protein is Outer membrane protein A.